Consider the following 224-residue polypeptide: ATP synthase subunit a (224 aa).

6 consecutive transmembrane segments (helical) span residues Leu-17–Leu-37, Ile-72–Ile-92, Leu-99–Ile-119, Met-125–Ile-145, Leu-170–Leu-190, and Ile-195–Leu-215.

Belongs to the ATPase A chain family. As to quaternary structure, F-type ATPases have 2 components, CF(1) - the catalytic core - and CF(0) - the membrane proton channel. CF(1) has five subunits: alpha(3), beta(3), gamma(1), delta(1), epsilon(1). CF(0) has three main subunits: a, b and c.

It is found in the mitochondrion inner membrane. Functionally, mitochondrial membrane ATP synthase (F(1)F(0) ATP synthase or Complex V) produces ATP from ADP in the presence of a proton gradient across the membrane which is generated by electron transport complexes of the respiratory chain. F-type ATPases consist of two structural domains, F(1) - containing the extramembraneous catalytic core and F(0) - containing the membrane proton channel, linked together by a central stalk and a peripheral stalk. During catalysis, ATP synthesis in the catalytic domain of F(1) is coupled via a rotary mechanism of the central stalk subunits to proton translocation. Key component of the proton channel; it may play a direct role in the translocation of protons across the membrane. The sequence is that of ATP synthase subunit a (mt:ATPase6) from Drosophila mauritiana (Fruit fly).